Here is a 194-residue protein sequence, read N- to C-terminus: PBAN-type neuropeptides (194 aa).

Positions 1 to 23 (MFNQTQLFVFLAVFTTSSVLGNN) are cleaved as a signal peptide. Leucine 47 bears the Leucine amide mark. The propeptide occupies 51–94 (SLRISTEDNRQAFFKLLEAADALKYYYDQLPYEMQADEPETRVT). Leucine amide occurs at positions 103, 123, 159, and 169. Positions 172-194 (ELSYDMMPNKIRVVRSTNKTRST) are excised as a propeptide.

It belongs to the pyrokinin family. As to expression, expressed in the subesophageal ganglions. Not found in corpora cardiaca, corpora allata and thoracic ganglia.

The protein resides in the secreted. In terms of biological role, a hormone that controls sex pheromone production in females and pheromone responsiveness in male. Also mediates visceral muscle contractile activity (myotropic activity). This Helicoverpa zea (Corn earworm moth) protein is PBAN-type neuropeptides.